A 78-amino-acid polypeptide reads, in one-letter code: Teretoxin Tsu6.15 (78 aa).

The signal sequence occupies residues 1–21 (MATSGRLLCFCLVLGLVFESL). Positions 22–47 (GYSEARPPRDRKRTVTAKRYDPLAQR) are excised as a propeptide.

Belongs to the teretoxin M (TM) superfamily. In terms of processing, contains 3 disulfide bonds. Expressed by the venom duct.

Its subcellular location is the secreted. This Terebra subulata (Chocolate spotted auger) protein is Teretoxin Tsu6.15.